Consider the following 410-residue polypeptide: G-protein coupled receptor family C group 5 member B (410 aa).

Positions 1 to 28 are cleaved as a signal peptide; it reads MFLVLERKMRTHQVFPLPLLLVIASVAS. The Extracellular segment spans residues 29–56; that stretch reads ENASTSRGCGLDLLPQYVSLCDLDAIWG. A glycan (N-linked (GlcNAc...) asparagine) is linked at N30. Residues 57-77 traverse the membrane as a helical segment; sequence IVVEAVAGAGALITLLLMLIL. The Cytoplasmic segment spans residues 78–94; sequence LVRLPFIKDKERKRPVC. Residues 95–115 traverse the membrane as a helical segment; it reads LHFLFLLGTLGLFGLTFAFII. Residues 116–126 are Extracellular-facing; the sequence is QMDETICSIRR. Residues 127 to 147 traverse the membrane as a helical segment; the sequence is FLWGVLFALCFSCLLSQAWRV. Residues 148 to 164 lie on the Cytoplasmic side of the membrane; that stretch reads RRLVRQGTSPASWQLVS. The helical transmembrane segment at 165–185 threads the bilayer; it reads LALCLMLVQVIIATEWLVLTV. Topologically, residues 186–199 are extracellular; it reads LRDTKPACAYEPMD. The chain crosses the membrane as a helical span at residues 200–220; that stretch reads FVMALIYDMVLLAITLAQSLF. Over 221–234 the chain is Cytoplasmic; sequence TLCGKFKRWKVNGA. The helical transmembrane segment at 235-255 threads the bilayer; the sequence is FILVTTFLSALIWVVWMTMYL. Residues 256–271 are Extracellular-facing; it reads FGNSLIKQGDAWSDPT. A helical transmembrane segment spans residues 272 to 292; it reads LAITLAASGWVFVIFHAIPEI. Residues 293–410 are Cytoplasmic-facing; that stretch reads HYTLLPPLQE…PPSHTGRHHW (118 aa). S355 is subject to Phosphoserine. The interval 356-381 is disordered; it reads LEQRSSSLGKKPSSLGNRPSAPFRSN. The span at 360 to 371 shows a compositional bias: low complexity; that stretch reads SSSLGKKPSSLG.

Belongs to the G-protein coupled receptor 3 family.

Its subcellular location is the cell membrane. The protein localises to the cytoplasmic vesicle membrane. Its function is as follows. G-protein coupled receptor involved in the regulation of cell volume. The sequence is that of G-protein coupled receptor family C group 5 member B (Gprc5b) from Mus musculus (Mouse).